A 26-amino-acid polypeptide reads, in one-letter code: uncharacterized protein (26 aa).

Post-translationally, phosphorylated by YfhK.

Probable member of a two-component regulatory system YfhA/YfhK. This is an uncharacterized protein from Klebsiella oxytoca.